The following is a 277-amino-acid chain: NLP effector protein Pc109095 (277 aa).

The N-terminal stretch at 1 to 19 is a signal peptide; it reads MKFIFAFVLCLAVAQTALG. The Hepta-peptide GHRHDWE motif motif lies at 119-125; sequence RSRHLWA. N-linked (GlcNAc...) asparagine glycosylation occurs at Asn-199.

This sequence belongs to the Necrosis inducing protein (NPP1) family.

It is found in the secreted. Its function is as follows. Secreted effector that contributes strongly to virulence during infection by P.capsici. This Phytophthora capsici protein is NLP effector protein Pc109095.